The primary structure comprises 339 residues: 4-dimethylallyltryptophan N-methyltransferase easF (339 aa).

Belongs to the methyltransferase superfamily. In terms of assembly, homodimer.

It carries out the reaction 4-(3-methylbut-2-enyl)-L-tryptophan + S-adenosyl-L-methionine = 4-(3-methylbut-2-enyl)-L-abrine + S-adenosyl-L-homocysteine + H(+). It participates in alkaloid biosynthesis; ergot alkaloid biosynthesis. Its function is as follows. 4-dimethylallyltryptophan N-methyltransferase; part of the gene cluster that mediates the biosynthesis of fumiclavanine C, a fungal ergot alkaloid. DmaW catalyzes the first step of ergot alkaloid biosynthesis by condensing dimethylallyl diphosphate (DMAP) and tryptophan to form 4-dimethylallyl-L-tryptophan. The second step is catalyzed by the methyltransferase easF that methylates 4-dimethylallyl-L-tryptophan in the presence of S-adenosyl-L-methionine, resulting in the formation of 4-dimethylallyl-L-abrine. The catalase easC and the FAD-dependent oxidoreductase easE then transform 4-dimethylallyl-L-abrine to chanoclavine-I which is further oxidized by EasD in the presence of NAD(+), resulting in the formation of chanoclavine-I aldehyde. EasA reduces chanoclavine-I aldehyde to dihydrochanoclavine-I aldehyde that spontaneously dehydrates to form 6,8-dimethyl-6,7-didehydroergoline. EasG then catalyzes the reduction of 6,8-dimethyl-6,7-didehydroergoline to form festuclavine. Hydrolysis of festuclavine by easM then leads to the formation of fumigaclavine B which is in turn acetylated by easN to fumigaclavine A. Finally, easL catalyzes the conversion of fumigaclavine A into fumigaclavine C by attaching a dimethylallyl moiety to C-2 of the indole nucleus. The chain is 4-dimethylallyltryptophan N-methyltransferase easF from Aspergillus fumigatus (strain ATCC MYA-4609 / CBS 101355 / FGSC A1100 / Af293) (Neosartorya fumigata).